Consider the following 221-residue polypeptide: 6-phosphogluconate phosphatase (221 aa).

The active-site Nucleophile is Asp-10. Mg(2+) contacts are provided by Asp-10, Asp-12, and Asp-167. Residue 10 to 12 (DCD) participates in substrate binding.

This sequence belongs to the HAD-like hydrolase superfamily. CbbY/CbbZ/Gph/YieH family. Mg(2+) serves as cofactor. Mn(2+) is required as a cofactor. The cofactor is Co(2+). It depends on Zn(2+) as a cofactor.

Catalyzes strongly the dephosphorylation of 6-phosphogluconate (6P-Glu) and slightly the dephosphorylation of dihydroxyacetone phosphate (DHAP) and phosphoenolpyruvate (PEP). Also hydrolyzes both purines (GMP and IMP) and pyrimidines as secondary substrates. This Escherichia coli (strain K12) protein is 6-phosphogluconate phosphatase (yieH).